A 1066-amino-acid chain; its full sequence is Hemoglobin and hemoglobin-haptoglobin-binding protein C (1066 aa).

The signal sequence occupies residues 1-24 (MTNFKFTLLARSIAFALNASTAYA). 7 consecutive repeat copies span residues 26-29 (QPTN), 30-33 (QPTN), 34-37 (QPTN), 38-41 (QPTN), 42-45 (QPTN), 46-49 (QPTN), and 50-53 (QPTN). A 7 X 4 AA tandem repeats of Q-P-T-N region spans residues 26–53 (QPTNQPTNQPTNQPTNQPTNQPTNQPTN). A compositionally biased stretch (low complexity) spans 26-54 (QPTNQPTNQPTNQPTNQPTNQPTNQPTNQ). A disordered region spans residues 26 to 57 (QPTNQPTNQPTNQPTNQPTNQPTNQPTNQDSN). A TonB box motif is present at residues 63–70 (EQINVSGS). The 135-residue stretch at 66–200 (NVSGSTETIN…LGGSVIFETK (135 aa)) folds into the TBDR plug domain. Positions 208–1066 (DKDYYVSYKR…NYRMSVQFEF (859 aa)) constitute a TBDR beta-barrel domain. The short motif at 1049-1066 (NRLYAPGRNYRMSVQFEF) is the TonB C-terminal box element.

The protein belongs to the TonB-dependent receptor family. Hemoglobin/haptoglobin binding protein subfamily.

The protein localises to the cell outer membrane. Its function is as follows. Acts as a receptor for hemoglobin or the hemoglobin/haptoglobin complex of the human host and is required for heme uptake. In Haemophilus influenzae, this protein is Hemoglobin and hemoglobin-haptoglobin-binding protein C (hgpC).